A 163-amino-acid polypeptide reads, in one-letter code: Inner membrane protein YcdZ (163 aa).

Over 1–2 (MN) the chain is Cytoplasmic. Residues 3–23 (ILLSIAITTGILSGIWGWVAV) form a helical membrane-spanning segment. A topological domain (periplasmic) is located at residue S24. A helical membrane pass occupies residues 25–45 (LGLLSWAGFLGCTAYFACPQG). The Cytoplasmic portion of the chain corresponds to 46-48 (GLK). A helical transmembrane segment spans residues 49-69 (GLAISAATLLSGVVWAMVIIY). The Periplasmic segment spans residues 70 to 71 (GS). A helical membrane pass occupies residues 72–92 (ALAPHLEILGYVITGIVAFLM). Residues 93–98 (CIQAKQ) are Cytoplasmic-facing. The helical transmembrane segment at 99 to 119 (LLLSFVPGTFIGACATFAGQG) threads the bilayer. Over 120-122 (DWK) the chain is Periplasmic. A helical membrane pass occupies residues 123-143 (LVLPSLALGLIFGYAMKNSGL). Topologically, residues 144 to 163 (WLAARSAKTAHREQEIKNKA) are cytoplasmic.

The protein to E.coli YahC.

It is found in the cell inner membrane. The polypeptide is Inner membrane protein YcdZ (ycdZ) (Escherichia coli (strain K12)).